The chain runs to 293 residues: Homoserine kinase (293 aa).

83–93 (PITRGMGSSSA) provides a ligand contact to ATP.

The protein belongs to the GHMP kinase family. Homoserine kinase subfamily.

The protein resides in the cytoplasm. The enzyme catalyses L-homoserine + ATP = O-phospho-L-homoserine + ADP + H(+). The protein operates within amino-acid biosynthesis; L-threonine biosynthesis; L-threonine from L-aspartate: step 4/5. Its function is as follows. Catalyzes the ATP-dependent phosphorylation of L-homoserine to L-homoserine phosphate. The polypeptide is Homoserine kinase (Helicobacter pylori (strain J99 / ATCC 700824) (Campylobacter pylori J99)).